The chain runs to 115 residues: MEKMLLKSTTRHVRIFTAEVVDEELKFHPNKLTLDLDPDNEFIWNEDSLNKINEKFNELIKERAGKDLDDYELRKIGSEIEGLIKFLLQNGQLSYNPDCRVMNYSMGLPKTNEVL.

This sequence belongs to the complex I NdhM subunit family. As to quaternary structure, NDH-1 can be composed of about 15 different subunits; different subcomplexes with different compositions have been identified which probably have different functions.

The protein resides in the cellular thylakoid membrane. It carries out the reaction a plastoquinone + NADH + (n+1) H(+)(in) = a plastoquinol + NAD(+) + n H(+)(out). The catalysed reaction is a plastoquinone + NADPH + (n+1) H(+)(in) = a plastoquinol + NADP(+) + n H(+)(out). Its function is as follows. NDH-1 shuttles electrons from an unknown electron donor, via FMN and iron-sulfur (Fe-S) centers, to quinones in the respiratory and/or the photosynthetic chain. The immediate electron acceptor for the enzyme in this species is believed to be plastoquinone. Couples the redox reaction to proton translocation, and thus conserves the redox energy in a proton gradient. Cyanobacterial NDH-1 also plays a role in inorganic carbon-concentration. The chain is NAD(P)H-quinone oxidoreductase subunit M from Prochlorococcus marinus (strain AS9601).